The following is a 528-amino-acid chain: Aurora kinase (528 aa).

Disordered regions lie at residues 1–35 (MMLP…SLFQ) and 48–235 (ISKP…KPQQ). 2 stretches are compositionally biased toward low complexity: residues 18–29 (NNNNSNNNNNNN) and 59–94 (HSHT…PNLN). Residues 95–104 (TSLVFTPTKN) show a composition bias toward polar residues. Positions 105–120 (SSSSSSSHSSSLLSSS) are enriched in low complexity. Positions 129-155 (QPESNHTRATSHYRTTSTSQYKSSANK) are enriched in polar residues. Residues 185 to 230 (TTTATQNTNNNKILNPSLSSSTIRFSTVSSSTSSSTTSSSSSSHTS) are compositionally biased toward low complexity. The Protein kinase domain maps to 242-515 (FEFGKILGKG…LKEVLNHNWI (274 aa)). ATP-binding positions include 248–256 (LGKGKLGRV) and Lys271. The active-site Proton acceptor is Asp365.

This sequence belongs to the protein kinase superfamily. Ser/Thr protein kinase family. Aurora subfamily.

The protein resides in the nucleus. Its subcellular location is the cytoplasm. It localises to the cytoskeleton. The protein localises to the spindle. It is found in the chromosome. The protein resides in the centromere. Its subcellular location is the kinetochore. It carries out the reaction L-seryl-[protein] + ATP = O-phospho-L-seryl-[protein] + ADP + H(+). The catalysed reaction is L-threonyl-[protein] + ATP = O-phospho-L-threonyl-[protein] + ADP + H(+). Component of the chromosomal passenger complex (CPC), a complex that acts as a key regulator of chromosome segregation and cytokinesis. Has a role in error-correction of aberrent kinetochore-microtubule attachments to ensure that sister kinetochores become bioriented and connect to opposite poles by promoting spindle assembly checkpoint signaling. This is Aurora kinase (IPL1) from Candida albicans (strain SC5314 / ATCC MYA-2876) (Yeast).